The chain runs to 578 residues: XK-related protein 6 (578 aa).

Transmembrane regions (helical) follow at residues Trp86–Val106, Phe114–Leu134, Trp253–Tyr273, Val307–Leu327, Trp348–Val368, Met377–Ala397, and Leu410–Tyr430.

This sequence belongs to the XK family.

It localises to the cell membrane. In Tetraodon nigroviridis (Spotted green pufferfish), this protein is XK-related protein 6 (xkr6).